Here is a 243-residue protein sequence, read N- to C-terminus: 4-hydroxy-tetrahydrodipicolinate reductase (243 aa).

Residues 9–14, 78–80, and 104–107 each bind NAD(+); these read GANGKM, GTS, and APNF. His-134 (proton donor/acceptor) is an active-site residue. Residue His-135 coordinates (S)-2,3,4,5-tetrahydrodipicolinate. The active-site Proton donor is Lys-138. 144–145 contacts (S)-2,3,4,5-tetrahydrodipicolinate; it reads GT.

The protein belongs to the DapB family.

Its subcellular location is the cytoplasm. The catalysed reaction is (S)-2,3,4,5-tetrahydrodipicolinate + NAD(+) + H2O = (2S,4S)-4-hydroxy-2,3,4,5-tetrahydrodipicolinate + NADH + H(+). It catalyses the reaction (S)-2,3,4,5-tetrahydrodipicolinate + NADP(+) + H2O = (2S,4S)-4-hydroxy-2,3,4,5-tetrahydrodipicolinate + NADPH + H(+). Its pathway is amino-acid biosynthesis; L-lysine biosynthesis via DAP pathway; (S)-tetrahydrodipicolinate from L-aspartate: step 4/4. Catalyzes the conversion of 4-hydroxy-tetrahydrodipicolinate (HTPA) to tetrahydrodipicolinate. In Legionella pneumophila (strain Corby), this protein is 4-hydroxy-tetrahydrodipicolinate reductase.